A 115-amino-acid chain; its full sequence is Putative septation protein SpoVG (115 aa).

The segment at 88–115 (PGTIATSEVSSQLEESDSDKTLSEDLKA) is disordered. Over residues 91-100 (IATSEVSSQL) the composition is skewed to polar residues. Residues 105–115 (SDKTLSEDLKA) are compositionally biased toward basic and acidic residues.

The protein belongs to the SpoVG family.

Could be involved in septation. The sequence is that of Putative septation protein SpoVG from Macrococcus caseolyticus (strain JCSC5402) (Macrococcoides caseolyticum).